We begin with the raw amino-acid sequence, 419 residues long: MAMISHRLRRALLTATSYVNRSISSSITPASDFPSVSAAVLKRSVIGRSTEVATRAPARLFSTRQYKLYKEGDEITEDTVLFEGCDYNHWLITMDFSKEETPKSPEEMVAAYEETCAQGLGISVEEAKQRMYACSTTTYQGFQAIMTEQESEKFKDLPGVVFILPDSYIDPQNKEYGGDKYENGVITHRPPPIQSGRARPRPRFDRSGGGSGGPQNFQRNTQYGQQPPMQGGGGSYGPQQGYATPGQGQGTQAPPPFQGGYNQGPRSPPPPYQAGYNQGQGSPVPPYQAGYNQVQGSPVPPYQGTQSSYGQGGSGNYSQGPQGGYNQGGPRNYNPQGAGNFGPASGAGNLGPAPGAGNPGYGQGYSGPGQEQNQTFPQADQRNRDWNNNNPAGQPGSDQVRSRSIMNLASFFFDILIRH.

The transit peptide at Met1–Leu60 directs the protein to the mitochondrion. Positions Lys174 to Arg401 are disordered. Residues Gly237–Gln252 show a composition bias toward low complexity. Positions Gly310–Gln327 are enriched in gly residues. Positions Gly342–Ala356 are enriched in low complexity. Gly residues predominate over residues Gly357–Gly367. The span at Glu371 to Arg401 shows a compositional bias: polar residues.

It belongs to the MORF family. In terms of assembly, homodimer and heterodimer with MORF3. Heterodimers with MORF8/RIP1, MORF4/RIP4 and MORF6/RIP6. Interacts with PCMP-E90/MEF13. Interacts with PCMP-H13/MEF35.

Its subcellular location is the mitochondrion. Its function is as follows. Involved in organellar RNA editing. Required for the processing of numerous RNA editing sites in mitochondria. Binds to the mitochondrial MEF19 and MEF21 factors, two pentatricopeptide repeat-containing proteins involved in RNA editing. The polypeptide is Multiple organellar RNA editing factor 1, mitochondrial (Arabidopsis thaliana (Mouse-ear cress)).